The sequence spans 154 residues: General odorant-binding protein 83a (154 aa).

A signal peptide spans 1–33 (MALNGFGRRVSASVLLIALSLLSGALILPPAAA). 3 disulfide bridges follow: Cys-55–Cys-86, Cys-82–Cys-133, and Cys-124–Cys-142.

Belongs to the PBP/GOBP family. In terms of tissue distribution, in the ventrolateral region of the antenna, expressed in two distinct types of olfactory hairs: in most sensilla trichodea and in a subset of the small sensilla basiconica (at protein level).

Its subcellular location is the secreted. In Drosophila melanogaster (Fruit fly), this protein is General odorant-binding protein 83a (Obp83a).